A 143-amino-acid chain; its full sequence is Boletus edulis lectin (143 aa).

Beta-D-Gal-(1-&gt;3)-alpha-D-GalNAc-binding positions include Ala30, 49-50, and 72-73; these read SG and HN. Residues 49–50 and 72–73 contribute to the N-acetyl-alpha-D-galactosamine site; these read SG and HN. N,N'-diacetylchitobiose-binding positions include 79–82, Arg103, and Tyr114; that span reads DVVT. Residues 79–82, Arg103, and Tyr114 each bind N-acetyl-alpha-D-glucosamine; that span reads DVVT.

The protein belongs to the fungal fruit body lectin family. As to quaternary structure, homotetramer.

In terms of biological role, lectin that recognizes O-linked galactose-beta-1,3-N-acetylgalactosamine, a disaccharide (Thomsen-Friedenreich antigen or T-disaccharide), present on cell surface glycoproteins. Can also bind chitin, N,N'-diacetylchitobiose, N-acetylgalactosamine and N-acetylglucosamine. Inhibits proliferation of colon, breast and liver cancer cell lines (in vitro). The sequence is that of Boletus edulis lectin from Boletus edulis (King bolete).